The primary structure comprises 485 residues: Putative ATP-dependent RNA helicase ste13 (485 aa).

The segment at 16-38 is disordered; the sequence is DRESFKGQMKAQPVDMRPKTEDV. The Q motif motif lies at 44–72; the sequence is TEFEDYYLKRELLMGIFEAGFERPSPIQE. The region spanning 75 to 245 is the Helicase ATP-binding domain; that stretch reads IPIALSGRDI…DKHLNKPYEI (171 aa). 88–95 contributes to the ATP binding site; that stretch reads AKNGTGKT. Residues 193-196 carry the DEAD box motif; the sequence is DEAD. Residues 255–415 enclose the Helicase C-terminal domain; that stretch reads GVTQYYAFVD…PIPPSIDPSL (161 aa). The tract at residues 437-485 is disordered; sequence LAAQQAKGQEGYHNRPNNNRGGHPRGGGNRGGYRQSNRQPRYRGQQKAD.

This sequence belongs to the DEAD box helicase family. DDX6/DHH1 subfamily.

It is found in the cytoplasm. The protein resides in the P-body. It catalyses the reaction ATP + H2O = ADP + phosphate + H(+). Its function is as follows. ATP-dependent RNA helicase involved in mRNA turnover, and more specifically in mRNA decapping. Is involved in G1/S DNA-damage checkpoint recovery, probably through the regulation of the translational status of a subset of mRNAs. May also have a role in translation and mRNA nuclear export. In Schizosaccharomyces pombe (strain 972 / ATCC 24843) (Fission yeast), this protein is Putative ATP-dependent RNA helicase ste13 (ste13).